A 293-amino-acid polypeptide reads, in one-letter code: 4-hydroxy-tetrahydrodipicolinate synthase (293 aa).

Thr44 lines the pyruvate pocket. The active-site Proton donor/acceptor is the Tyr132. Residue Lys160 is the Schiff-base intermediate with substrate of the active site. Ile202 provides a ligand contact to pyruvate.

This sequence belongs to the DapA family. In terms of assembly, homotetramer; dimer of dimers.

It localises to the cytoplasm. The catalysed reaction is L-aspartate 4-semialdehyde + pyruvate = (2S,4S)-4-hydroxy-2,3,4,5-tetrahydrodipicolinate + H2O + H(+). The protein operates within amino-acid biosynthesis; L-lysine biosynthesis via DAP pathway; (S)-tetrahydrodipicolinate from L-aspartate: step 3/4. Functionally, catalyzes the condensation of (S)-aspartate-beta-semialdehyde [(S)-ASA] and pyruvate to 4-hydroxy-tetrahydrodipicolinate (HTPA). This chain is 4-hydroxy-tetrahydrodipicolinate synthase, found in Pelagibacter ubique (strain HTCC1062).